Here is a 206-residue protein sequence, read N- to C-terminus: LOB domain-containing protein 35 (206 aa).

The region spanning 4 to 105 (TCCSACKVMK…EQINSAKNEL (102 aa)) is the LOB domain. The interval 184–206 (ASTSGGTSATQKTLPFPQNHNQP) is disordered.

This sequence belongs to the LOB domain-containing protein family.

This Arabidopsis thaliana (Mouse-ear cress) protein is LOB domain-containing protein 35 (LBD35).